The sequence spans 436 residues: GTPase Der (436 aa).

2 consecutive EngA-type G domains span residues 4–167 (PVIA…PTDL) and 175–351 (IKFS…ENQN). GTP-binding positions include 10–17 (GRPNVGKS), 57–61 (DTGGI), 119–122 (NKAD), 181–188 (GRPNVGKS), 229–233 (DTAGI), and 294–297 (NKWD). Positions 352–436 (RRIQSALLND…PIHLIPRQRK (85 aa)) constitute a KH-like domain.

The protein belongs to the TRAFAC class TrmE-Era-EngA-EngB-Septin-like GTPase superfamily. EngA (Der) GTPase family. In terms of assembly, associates with the 50S ribosomal subunit.

Its function is as follows. GTPase that plays an essential role in the late steps of ribosome biogenesis. In Latilactobacillus sakei subsp. sakei (strain 23K) (Lactobacillus sakei subsp. sakei), this protein is GTPase Der.